The chain runs to 150 residues: MMIAENAPFWRRKTLEELSQQEWESLCDGCGLCCLQKLEDEDDNSVYYTRIACKLLDLNTCQCSDYPNRFAQVPDCIQLTPGKADQFKWLPSTCGYRLVSEGKDLPAWHHLVCGDRQQVHEQRISQSGRMLSEHDVHEDDWEDHLIFRAS.

Belongs to the UPF0260 family.

The sequence is that of UPF0260 protein PP_4587 from Pseudomonas putida (strain ATCC 47054 / DSM 6125 / CFBP 8728 / NCIMB 11950 / KT2440).